We begin with the raw amino-acid sequence, 434 residues long: UDP-N-acetylglucosamine 1-carboxyvinyltransferase 1 (434 aa).

Phosphoenolpyruvate is bound at residue 22-23 (KN). R93 serves as a coordination point for UDP-N-acetyl-alpha-D-glucosamine. C117 (proton donor) is an active-site residue. C117 is modified (2-(S-cysteinyl)pyruvic acid O-phosphothioketal). UDP-N-acetyl-alpha-D-glucosamine is bound by residues 122-126 (RPIDQ), D306, and V328.

This sequence belongs to the EPSP synthase family. MurA subfamily.

The protein resides in the cytoplasm. The catalysed reaction is phosphoenolpyruvate + UDP-N-acetyl-alpha-D-glucosamine = UDP-N-acetyl-3-O-(1-carboxyvinyl)-alpha-D-glucosamine + phosphate. It participates in cell wall biogenesis; peptidoglycan biosynthesis. In terms of biological role, cell wall formation. Adds enolpyruvyl to UDP-N-acetylglucosamine. In Bacillus cereus (strain ATCC 14579 / DSM 31 / CCUG 7414 / JCM 2152 / NBRC 15305 / NCIMB 9373 / NCTC 2599 / NRRL B-3711), this protein is UDP-N-acetylglucosamine 1-carboxyvinyltransferase 1.